We begin with the raw amino-acid sequence, 479 residues long: Adenosylhomocysteinase (479 aa).

Substrate-binding residues include Thr-65, Asp-145, and Glu-205. 206 to 208 (TTT) contacts NAD(+). Residues Lys-235 and Asp-239 each coordinate substrate. NAD(+)-binding positions include Asn-240, 269–274 (GYGDVG), Glu-292, Asn-327, 348–350 (IGH), and Asn-393.

Belongs to the adenosylhomocysteinase family. NAD(+) serves as cofactor.

It localises to the cytoplasm. The catalysed reaction is S-adenosyl-L-homocysteine + H2O = L-homocysteine + adenosine. Its pathway is amino-acid biosynthesis; L-homocysteine biosynthesis; L-homocysteine from S-adenosyl-L-homocysteine: step 1/1. In terms of biological role, may play a key role in the regulation of the intracellular concentration of adenosylhomocysteine. In Herminiimonas arsenicoxydans, this protein is Adenosylhomocysteinase.